The sequence spans 382 residues: Alkanesulfonate monooxygenase (382 aa).

This sequence belongs to the SsuD family. In terms of assembly, homotetramer.

The enzyme catalyses an alkanesulfonate + FMNH2 + O2 = an aldehyde + FMN + sulfite + H2O + 2 H(+). Catalyzes the desulfonation of aliphatic sulfonates. The chain is Alkanesulfonate monooxygenase from Yersinia pestis bv. Antiqua (strain Antiqua).